Consider the following 350-residue polypeptide: Phenylalanine--tRNA ligase alpha subunit (350 aa).

Residue glutamate 271 coordinates Mg(2+).

The protein belongs to the class-II aminoacyl-tRNA synthetase family. Phe-tRNA synthetase alpha subunit type 1 subfamily. As to quaternary structure, tetramer of two alpha and two beta subunits. Mg(2+) is required as a cofactor.

The protein resides in the cytoplasm. The catalysed reaction is tRNA(Phe) + L-phenylalanine + ATP = L-phenylalanyl-tRNA(Phe) + AMP + diphosphate + H(+). The chain is Phenylalanine--tRNA ligase alpha subunit from Paracidovorax citrulli (strain AAC00-1) (Acidovorax citrulli).